Reading from the N-terminus, the 893-residue chain is Translation initiation factor IF-2 (893 aa).

The tract at residues 49 to 303 (LNREAGSGPD…KGSSLQQGFQ (255 aa)) is disordered. The span at 68–82 (STLNIPGTGGKSKSV) shows a compositional bias: polar residues. Composition is skewed to basic and acidic residues over residues 93-159 (VKRD…KDKV) and 166-216 (DMTK…EENK). A compositionally biased stretch (basic residues) spans 254 to 269 (GRGRNAKAARPAKKGN). A compositionally biased stretch (basic and acidic residues) spans 270-283 (KHAESKADREEARA). The tr-type G domain occupies 392 to 561 (PRAPVVTIMG…LLQAEVLELK (170 aa)). Positions 401–408 (GHVDHGKT) are G1. 401–408 (GHVDHGKT) contributes to the GTP binding site. Positions 426–430 (GITQH) are G2. Residues 447–450 (DTPG) form a G3 region. GTP-binding positions include 447-451 (DTPGH) and 501-504 (NKID). The G4 stretch occupies residues 501-504 (NKID). Residues 537-539 (SAK) form a G5 region.

Belongs to the TRAFAC class translation factor GTPase superfamily. Classic translation factor GTPase family. IF-2 subfamily.

Its subcellular location is the cytoplasm. Its function is as follows. One of the essential components for the initiation of protein synthesis. Protects formylmethionyl-tRNA from spontaneous hydrolysis and promotes its binding to the 30S ribosomal subunits. Also involved in the hydrolysis of GTP during the formation of the 70S ribosomal complex. This chain is Translation initiation factor IF-2, found in Salmonella arizonae (strain ATCC BAA-731 / CDC346-86 / RSK2980).